Consider the following 70-residue polypeptide: Peptide BmKn1 (70 aa).

Positions 1–23 are cleaved as a signal peptide; it reads MKSQTFFLLFLVVLLLAISQSEA. F36 is modified (phenylalanine amide). Residues 40 to 70 constitute a propeptide that is removed on maturation; it reads SMRDMDTMKYLYDPSLSAADLKTLQKLMENY.

Belongs to the non-disulfide-bridged peptide (NDBP) superfamily. Short antimicrobial peptide (group 4) family. As to expression, expressed by the venom gland.

It localises to the secreted. The protein localises to the target cell membrane. In terms of biological role, antibacterial peptide. The protein is Peptide BmKn1 of Olivierus martensii (Manchurian scorpion).